Reading from the N-terminus, the 323-residue chain is uncharacterized protein (323 aa).

The TIR domain maps to 1–142 (MPSVFFSYSH…QVAKAVREAA (142 aa)).

This is an uncharacterized protein from Sinorhizobium fredii (strain NBRC 101917 / NGR234).